The chain runs to 695 residues: Eukaryotic translation initiation factor 3 subunit B (695 aa).

Over residues 1–10 the composition is skewed to basic and acidic residues; sequence MAKKKGDEKA. The segment at 1 to 43 is disordered; the sequence is MAKKKGDEKANPAPQSDNEEQNFEEEPDFDDPEDFVEIPEEEL. Over residues 17–43 the composition is skewed to acidic residues; the sequence is DNEEQNFEEEPDFDDPEDFVEIPEEEL. Residues 60–144 enclose the RRM domain; it reads NVVVVDGCPQ…HTFLVNLFTD (85 aa). 4 WD repeats span residues 164–205, 295–335, 338–373, and 444–486; these read KVQS…PLLL, PPDE…LLDK, IKIP…TLLE, and EIKE…APTL.

This sequence belongs to the eIF-3 subunit B family. As to quaternary structure, component of the eukaryotic translation initiation factor 3 (eIF-3) complex.

It localises to the cytoplasm. Its function is as follows. RNA-binding component of the eukaryotic translation initiation factor 3 (eIF-3) complex, which is involved in protein synthesis of a specialized repertoire of mRNAs and, together with other initiation factors, stimulates binding of mRNA and methionyl-tRNAi to the 40S ribosome. The eIF-3 complex specifically targets and initiates translation of a subset of mRNAs involved in cell proliferation. This Bombyx mori (Silk moth) protein is Eukaryotic translation initiation factor 3 subunit B.